A 310-amino-acid polypeptide reads, in one-letter code: E3 ubiquitin-protein ligase CSU1 (310 aa).

The RING-type 1; degenerate zinc-finger motif lies at 43 to 67; it reads CSLCLKPFIDPMCCHKGHVFCRECI. Residues 75–95 are a coiled coil; that stretch reads KKDIQRRLAAHSSQKKQDKDE. A disordered region spans residues 110–138; that stretch reads EFDQQNHSAMPRNSDKNHNEDKNGFHGAN. Over residues 122–133 the composition is skewed to basic and acidic residues; that stretch reads NSDKNHNEDKNG. The RING-type 2 zinc-finger motif lies at 221–263; that stretch reads CPSCKVTLTNTMSLVALSSCGHVFCKKCAEKFMPVDKVCLVCD.

Belongs to the NOSIP family.

It is found in the nucleus. The protein resides in the nucleus speckle. The catalysed reaction is S-ubiquitinyl-[E2 ubiquitin-conjugating enzyme]-L-cysteine + [acceptor protein]-L-lysine = [E2 ubiquitin-conjugating enzyme]-L-cysteine + N(6)-ubiquitinyl-[acceptor protein]-L-lysine.. It functions in the pathway protein modification; protein ubiquitination. RING-finger E3 ubiquitin-protein ligase that plays an major role in maintaining COP1 homeostasis in darkness. Negatively regulates COP1 protein accumulation by targeting COP1 for ubiquitination and subsequent proteasomal degradation in dark-grown seedlings. Negatively regulates the accumulation of SPA1 protein in the dark. The polypeptide is E3 ubiquitin-protein ligase CSU1 (Arabidopsis thaliana (Mouse-ear cress)).